Consider the following 158-residue polypeptide: Transcription factor HY5 (158 aa).

The segment covering M1 to A25 has biased composition (low complexity). The interval M1–E105 is disordered. Over residues L26–P44 the composition is skewed to basic and acidic residues. The segment at E35–M46 is interaction with COP1. The span at G47–G58 shows a compositional bias: low complexity. Residues E86–T149 enclose the bZIP domain. The interval K88–K108 is basic motif. A leucine-zipper region spans residues L114–L142.

This sequence belongs to the bZIP family. In terms of assembly, interacts with COP1. Post-translationally, ubiquitinated by COP1. Ubiquitination takes place in darkness and leads to its subsequent degradation, thereby preventing to activate photomorphogenesis signals.

It localises to the nucleus. Transcription factor that promotes photomorphogenesis in the light and positively regulates fruit pigmentation and fruit nutritional quality. Probably acts downstream of the light receptor network and directly affects transcription of light-induced genes. The polypeptide is Transcription factor HY5 (HY5) (Solanum lycopersicum (Tomato)).